A 363-amino-acid chain; its full sequence is Small ribosomal subunit biogenesis GTPase RsgA (363 aa).

Residues 112 to 268 enclose the CP-type G domain; it reads HQQVIAANID…LIDTPGMREL (157 aa). Residues 157-160 and 210-218 each bind GTP; these read TKAD and GSSGAGKST. Zn(2+) contacts are provided by C291, C296, H298, and C304. The interval 340 to 363 is disordered; sequence RVAQNNRGKGSGKRPASIDRPGRR.

It belongs to the TRAFAC class YlqF/YawG GTPase family. RsgA subfamily. In terms of assembly, monomer. Associates with 30S ribosomal subunit, binds 16S rRNA. Zn(2+) serves as cofactor.

Its subcellular location is the cytoplasm. One of several proteins that assist in the late maturation steps of the functional core of the 30S ribosomal subunit. Helps release RbfA from mature subunits. May play a role in the assembly of ribosomal proteins into the subunit. Circularly permuted GTPase that catalyzes slow GTP hydrolysis, GTPase activity is stimulated by the 30S ribosomal subunit. This Xanthomonas oryzae pv. oryzae (strain MAFF 311018) protein is Small ribosomal subunit biogenesis GTPase RsgA.